We begin with the raw amino-acid sequence, 599 residues long: Crinkler effector protein 8 (599 aa).

The first 17 residues, 1–17 (MVTLFCAVVGVAGSTFP), serve as a signal peptide directing secretion. The interval 18–52 (VDINENKSVGHLKKAIKEEKMYQFPADELQLFLAK) is LQLFLAK domain. Asparagine 23 is a glycosylation site (N-linked (GlcNAc...) asparagine). The interval 53–109 (AGGNAWLSSLTEDVKKLKKGEKTALVKSLTQEEKELQGEDPISECLEGMDPPKVKQI) is DWL domain. The short motif at 110-116 (HVLVALP) is the HVLVXXP motif element. The tract at residues 117–590 (PGTSSAPISD…EAAEQESQGK (474 aa)) is C-terminal D2 effector domain. Phosphoserine occurs at positions 249, 281, and 385. A Protein kinase domain is found at 289–590 (LSKKLVWSYG…EAAEQESQGK (302 aa)). Residue aspartate 470 is the Proton acceptor of the active site. Residues serine 474 and serine 587 each carry the phosphoserine modification. The tract at residues 577-599 (RFEREAAEQESQGKGVRKKHRRA) is disordered. Positions 590-599 (KGVRKKHRRA) match the Host nuclear localization signal motif.

In the N-terminal section; belongs to the Crinkler effector family. This sequence in the C-terminal section; belongs to the protein kinase superfamily. Dimerizes in host plants. Autophosphorylated at Ser-249, Ser-281, Ser-385, Ser-474 and Ser-587. Additional serines or threonines are also targeted for phosphorylation.

The protein resides in the secreted. Its subcellular location is the host nucleus. The catalysed reaction is L-seryl-[protein] + ATP = O-phospho-L-seryl-[protein] + ADP + H(+). It carries out the reaction L-threonyl-[protein] + ATP = O-phospho-L-threonyl-[protein] + ADP + H(+). Functionally, secreted effector that induces cell death when expressed in host plants. Acts as a kinase and is able to autophosphorylate, however its cell death inducing ability is not a direct result of its kinase activity, but rather a consequence of the phosphorylated state of the five identified serine residues in the CRN8 protein. The protein is Crinkler effector protein 8 of Phytophthora infestans (Potato late blight agent).